Consider the following 916-residue polypeptide: DNA gyrase subunit A (916 aa).

The Topo IIA-type catalytic domain occupies 42–544 (LPDVRDGLKP…FGGDIADEDL (503 aa)). The active-site O-(5'-phospho-DNA)-tyrosine intermediate is tyrosine 130. Residues 571 to 577 (QRRGGRG) carry the GyrA-box motif. The span at 739-748 (SDDLEDETAD) shows a compositional bias: acidic residues. Disordered stretches follow at residues 739–774 (SDDL…RGMR) and 897–916 (ESEL…EAEN).

The protein belongs to the type II topoisomerase GyrA/ParC subunit family. As to quaternary structure, heterotetramer, composed of two GyrA and two GyrB chains. In the heterotetramer, GyrA contains the active site tyrosine that forms a transient covalent intermediate with DNA, while GyrB binds cofactors and catalyzes ATP hydrolysis.

Its subcellular location is the cytoplasm. The catalysed reaction is ATP-dependent breakage, passage and rejoining of double-stranded DNA.. In terms of biological role, a type II topoisomerase that negatively supercoils closed circular double-stranded (ds) DNA in an ATP-dependent manner to modulate DNA topology and maintain chromosomes in an underwound state. Negative supercoiling favors strand separation, and DNA replication, transcription, recombination and repair, all of which involve strand separation. Also able to catalyze the interconversion of other topological isomers of dsDNA rings, including catenanes and knotted rings. Type II topoisomerases break and join 2 DNA strands simultaneously in an ATP-dependent manner. In Neisseria gonorrhoeae, this protein is DNA gyrase subunit A.